Consider the following 310-residue polypeptide: tRNA-cytidine(32) 2-sulfurtransferase (310 aa).

The PP-loop motif signature appears at 45–50 (SGGKDS). 3 residues coordinate [4Fe-4S] cluster: Cys120, Cys123, and Cys211.

The protein belongs to the TtcA family. As to quaternary structure, homodimer. It depends on Mg(2+) as a cofactor. Requires [4Fe-4S] cluster as cofactor.

It localises to the cytoplasm. The catalysed reaction is cytidine(32) in tRNA + S-sulfanyl-L-cysteinyl-[cysteine desulfurase] + AH2 + ATP = 2-thiocytidine(32) in tRNA + L-cysteinyl-[cysteine desulfurase] + A + AMP + diphosphate + H(+). It functions in the pathway tRNA modification. Catalyzes the ATP-dependent 2-thiolation of cytidine in position 32 of tRNA, to form 2-thiocytidine (s(2)C32). The sulfur atoms are provided by the cysteine/cysteine desulfurase (IscS) system. In Shewanella baltica (strain OS185), this protein is tRNA-cytidine(32) 2-sulfurtransferase.